The primary structure comprises 177 residues: Large ribosomal subunit protein uL6 (177 aa).

The protein belongs to the universal ribosomal protein uL6 family. In terms of assembly, part of the 50S ribosomal subunit.

Functionally, this protein binds to the 23S rRNA, and is important in its secondary structure. It is located near the subunit interface in the base of the L7/L12 stalk, and near the tRNA binding site of the peptidyltransferase center. The chain is Large ribosomal subunit protein uL6 from Bradyrhizobium sp. (strain ORS 278).